A 427-amino-acid polypeptide reads, in one-letter code: Serine hydroxymethyltransferase (427 aa).

(6S)-5,6,7,8-tetrahydrofolate-binding positions include L122 and 126-128; that span reads GHL. Position 231 is an N6-(pyridoxal phosphate)lysine (K231). (6S)-5,6,7,8-tetrahydrofolate contacts are provided by residues E247 and 355-357; that span reads SPF.

Belongs to the SHMT family. Homodimer. Pyridoxal 5'-phosphate is required as a cofactor.

It is found in the cytoplasm. The catalysed reaction is (6R)-5,10-methylene-5,6,7,8-tetrahydrofolate + glycine + H2O = (6S)-5,6,7,8-tetrahydrofolate + L-serine. It participates in one-carbon metabolism; tetrahydrofolate interconversion. The protein operates within amino-acid biosynthesis; glycine biosynthesis; glycine from L-serine: step 1/1. Functionally, catalyzes the reversible interconversion of serine and glycine with tetrahydrofolate (THF) serving as the one-carbon carrier. This reaction serves as the major source of one-carbon groups required for the biosynthesis of purines, thymidylate, methionine, and other important biomolecules. Also exhibits THF-independent aldolase activity toward beta-hydroxyamino acids, producing glycine and aldehydes, via a retro-aldol mechanism. The chain is Serine hydroxymethyltransferase from Crocosphaera subtropica (strain ATCC 51142 / BH68) (Cyanothece sp. (strain ATCC 51142)).